Here is a 336-residue protein sequence, read N- to C-terminus: tRNA N6-adenosine threonylcarbamoyltransferase (336 aa).

Positions 114 and 118 each coordinate Fe cation. Substrate-binding positions include 136–140 (LVSGG), Asp169, Gly182, Asp186, and Asn275. Asp301 contributes to the Fe cation binding site.

The protein belongs to the KAE1 / TsaD family. The cofactor is Fe(2+).

It is found in the cytoplasm. The catalysed reaction is L-threonylcarbamoyladenylate + adenosine(37) in tRNA = N(6)-L-threonylcarbamoyladenosine(37) in tRNA + AMP + H(+). Its function is as follows. Required for the formation of a threonylcarbamoyl group on adenosine at position 37 (t(6)A37) in tRNAs that read codons beginning with adenine. Is involved in the transfer of the threonylcarbamoyl moiety of threonylcarbamoyl-AMP (TC-AMP) to the N6 group of A37, together with TsaE and TsaB. TsaD likely plays a direct catalytic role in this reaction. This Streptococcus pneumoniae (strain JJA) protein is tRNA N6-adenosine threonylcarbamoyltransferase.